A 284-amino-acid chain; its full sequence is Ribosomal RNA small subunit methyltransferase A (284 aa).

6 residues coordinate S-adenosyl-L-methionine: N26, L28, G53, E74, D97, and N127.

This sequence belongs to the class I-like SAM-binding methyltransferase superfamily. rRNA adenine N(6)-methyltransferase family. RsmA subfamily.

It is found in the cytoplasm. It carries out the reaction adenosine(1518)/adenosine(1519) in 16S rRNA + 4 S-adenosyl-L-methionine = N(6)-dimethyladenosine(1518)/N(6)-dimethyladenosine(1519) in 16S rRNA + 4 S-adenosyl-L-homocysteine + 4 H(+). Its function is as follows. Specifically dimethylates two adjacent adenosines (A1518 and A1519) in the loop of a conserved hairpin near the 3'-end of 16S rRNA in the 30S particle. May play a critical role in biogenesis of 30S subunits. The chain is Ribosomal RNA small subunit methyltransferase A from Anaeromyxobacter dehalogenans (strain 2CP-C).